Here is a 251-residue protein sequence, read N- to C-terminus: Flagellar L-ring protein (251 aa).

Residues 1 to 17 (MIRKLAALIVAAAALQA) form the signal peptide. Cysteine 18 carries the N-palmitoyl cysteine lipid modification. Cysteine 18 is lipidated: S-diacylglycerol cysteine.

Belongs to the FlgH family. As to quaternary structure, the basal body constitutes a major portion of the flagellar organelle and consists of four rings (L,P,S, and M) mounted on a central rod.

Its subcellular location is the cell outer membrane. The protein resides in the bacterial flagellum basal body. Assembles around the rod to form the L-ring and probably protects the motor/basal body from shearing forces during rotation. This Maricaulis maris (strain MCS10) (Caulobacter maris) protein is Flagellar L-ring protein.